The following is a 49-amino-acid chain: XADGAMINYVEAFPHIKCTVLAPEFGAYVAFEVYPGFSEYKEWSELFTK.

In Zea mays (Maize), this protein is Unknown protein from spot 75 of 2D-PAGE of etiolated coleoptile.